A 711-amino-acid polypeptide reads, in one-letter code: Nuclear intron maturase 1, mitochondrial (711 aa).

Residues 147–459 form the Reverse transcriptase domain; sequence KDKISMNGGE…RGIQFLDHII (313 aa). The intron maturase type-2 stretch occupies residues 484 to 653; sequence GTLLSVSASL…QVLQEYIRLQ (170 aa).

It belongs to the plant nuclear intron maturase (nMat) family. Expressed at low levels in seedlings and accumulates in adult plants.

It localises to the mitochondrion. Nuclear-encoded maturase required for splicing of group-II introns in mitochondria. Necessary for mitochondrial biogenesis during early developmental stages. Involved in the splicing of mitochondrial NAD4 transcripts. Required for trans-splicing of NAD1 intron 1 and also functions in cis-splicing of NAD2 intron 1 and NAD4 intron 2. Required for the regulation of fundamental metabolic pathways such as amino acid metabolism, triacylglycerol degradation and polysaccharide synthesis (cellulose and starch) during the early stage of plant growth. Implicated in stress responses. The sequence is that of Nuclear intron maturase 1, mitochondrial from Arabidopsis thaliana (Mouse-ear cress).